The following is an 876-amino-acid chain: Vacuolar protein sorting-associated protein 39 homolog (876 aa).

Residues 14–310 (GVQIESIAAY…KFLVHADKGT (297 aa)) form the CNH domain. A CHCR repeat occupies 578 to 741 (ELIEVESLPR…ILIPPTQPLY (164 aa)).

This sequence belongs to the VAM6/VPS39 family. As to quaternary structure, part of the homotypic fusion and vacuole protein sorting (HOPS) complex, composed of Vps16A, car/Vps33A, dor/Vps18, Vps39, Vps11 and lt/Vps41. Interacts with Rab2 (GTP-bound form); the interaction is probably direct.

The protein localises to the cytoplasm. Its subcellular location is the lysosome membrane. It localises to the late endosome membrane. It is found in the late endosome. The protein resides in the lysosome. Its function is as follows. Part of the homotypic fusion and vacuole protein sorting (HOPS) tethering complex involved in endo-lysosomal vesicle trafficking and lysosome biogenesis. The HOPS complex facilitates docking and fusion of lysosomes with late endosomes and several other types of vesicles. The HOPS complex is also involved in autophagy and crinophagy (the elimination of unused secretory granules through their fusion with lysosomes). The HOPS complex mediates autophagocitic flux, probably by binding autophagosome-associated Syx17/syntaxin 17, promoting assembly of the trans-SNARE complex and instigating autophagosome-lysosome fusion. Independent of Syx17/syntaxin 17, HOPS is involved in biosynthetic transport to lysosomes and lysosome-related organelles such as eye-pigment granules. Required for autophagocytosis-dependent remodeling of myofibrils and transverse-tubules (T-tubules) during metamorphosis. The polypeptide is Vacuolar protein sorting-associated protein 39 homolog (Drosophila melanogaster (Fruit fly)).